The primary structure comprises 275 residues: NH(3)-dependent NAD(+) synthetase (275 aa).

46 to 53 (GISGGQDS) is a binding site for ATP. Residue Asp52 coordinates Mg(2+). Deamido-NAD(+) is bound at residue Arg140. Residue Thr160 coordinates ATP. Glu165 is a binding site for Mg(2+). 2 residues coordinate deamido-NAD(+): Lys173 and Asp180. Residues Lys189 and Thr211 each coordinate ATP. 260–261 (HK) contacts deamido-NAD(+).

It belongs to the NAD synthetase family. Homodimer.

It carries out the reaction deamido-NAD(+) + NH4(+) + ATP = AMP + diphosphate + NAD(+) + H(+). The protein operates within cofactor biosynthesis; NAD(+) biosynthesis; NAD(+) from deamido-NAD(+) (ammonia route): step 1/1. In terms of biological role, catalyzes the ATP-dependent amidation of deamido-NAD to form NAD. Uses ammonia as a nitrogen source. The polypeptide is NH(3)-dependent NAD(+) synthetase (Salmonella arizonae (strain ATCC BAA-731 / CDC346-86 / RSK2980)).